Consider the following 126-residue polypeptide: MSIPADLKYTESHEWVRTEADGTLTVGITDHAQEALGDIVFFEVQELGKTVTAGDTVAVIESVKAASDIYAPVSGEIIEANTAVADTPDSVNSTPYESWLFKIKPAADATQDRLIDADAYTKSIGA.

Positions 23–104 (TLTVGITDHA…PYESWLFKIK (82 aa)) constitute a Lipoyl-binding domain. Lys64 carries the post-translational modification N6-lipoyllysine.

It belongs to the GcvH family. In terms of assembly, the glycine cleavage system is composed of four proteins: P, T, L and H. (R)-lipoate serves as cofactor.

Its function is as follows. The glycine cleavage system catalyzes the degradation of glycine. The H protein shuttles the methylamine group of glycine from the P protein to the T protein. This chain is Glycine cleavage system H protein, found in Paraburkholderia phytofirmans (strain DSM 17436 / LMG 22146 / PsJN) (Burkholderia phytofirmans).